A 99-amino-acid polypeptide reads, in one-letter code: NADH-quinone oxidoreductase subunit K (99 aa).

3 helical membrane passes run 3–23 (PDNYLHLSALLFTIGAAGVLL), 28–48 (IVVFMCVELMLNAANLAFVAF), and 59–79 (VVAFFTMVVAACEVVIGLAII).

This sequence belongs to the complex I subunit 4L family. In terms of assembly, NDH-1 is composed of 14 different subunits. Subunits NuoA, H, J, K, L, M, N constitute the membrane sector of the complex.

It localises to the cell membrane. It catalyses the reaction a quinone + NADH + 5 H(+)(in) = a quinol + NAD(+) + 4 H(+)(out). NDH-1 shuttles electrons from NADH, via FMN and iron-sulfur (Fe-S) centers, to quinones in the respiratory chain. The immediate electron acceptor for the enzyme in this species is believed to be a menaquinone. Couples the redox reaction to proton translocation (for every two electrons transferred, four hydrogen ions are translocated across the cytoplasmic membrane), and thus conserves the redox energy in a proton gradient. This chain is NADH-quinone oxidoreductase subunit K, found in Mycobacterium sp. (strain KMS).